The chain runs to 303 residues: Aspartate carbamoyltransferase catalytic subunit (303 aa).

Arg-49 and Thr-50 together coordinate carbamoyl phosphate. Lys-77 contacts L-aspartate. Carbamoyl phosphate-binding residues include Arg-99, His-126, and Gln-129. L-aspartate contacts are provided by Arg-159 and Arg-211. Positions 252 and 253 each coordinate carbamoyl phosphate.

Belongs to the aspartate/ornithine carbamoyltransferase superfamily. ATCase family. In terms of assembly, heterododecamer (2C3:3R2) of six catalytic PyrB chains organized as two trimers (C3), and six regulatory PyrI chains organized as three dimers (R2).

The enzyme catalyses carbamoyl phosphate + L-aspartate = N-carbamoyl-L-aspartate + phosphate + H(+). The protein operates within pyrimidine metabolism; UMP biosynthesis via de novo pathway; (S)-dihydroorotate from bicarbonate: step 2/3. Catalyzes the condensation of carbamoyl phosphate and aspartate to form carbamoyl aspartate and inorganic phosphate, the committed step in the de novo pyrimidine nucleotide biosynthesis pathway. This Listeria innocua serovar 6a (strain ATCC BAA-680 / CLIP 11262) protein is Aspartate carbamoyltransferase catalytic subunit.